A 1727-amino-acid polypeptide reads, in one-letter code: DNA-directed RNA polymerase II subunit rpb1 (1727 aa).

C66, C69, C76, H79, C106, C109, C147, and C175 together coordinate Zn(2+). Mg(2+) is bound by residues D486, D488, and D490. Positions 819 to 831 (PQEFFFHAMGGRE) are bridging helix. K1266 is covalently cross-linked (Glycyl lysine isopeptide (Lys-Gly) (interchain with G-Cter in ubiquitin)). Disordered regions lie at residues 1478–1512 (EPSN…YDAP) and 1551–1727 (PTYS…NKKK). The segment covering 1480-1505 (SNVSYPDTPGSQTPSYSYGDGSTTPF) has biased composition (polar residues). 23 repeat units span residues 1553–1559 (YSPTSPS), 1560–1566 (YSPTSPS), 1567–1573 (YSPTSPS), 1574–1580 (YSPTSPS), 1581–1587 (YSPTSPS), 1588–1594 (YSPTSPS), 1595–1601 (YSPTSPF), 1602–1608 (YSPTSPS), 1609–1615 (YSPTSPS), 1616–1622 (YSPTSPS), 1623–1629 (YSPTSPS), 1630–1636 (YSPTSPS), 1637–1643 (YSPTSPS), 1644–1650 (YSPTSPS), 1651–1657 (YSPTSPS), 1658–1664 (YSPTSPS), 1665–1671 (YSPTSPS), 1672–1678 (YSPTSPS), 1679–1685 (YSPTSPS), 1686–1692 (YSPSSPS), 1693–1699 (YSPSSPS), 1700–1706 (YSPSSPS), and 1707–1713 (YSPSSPT). The interval 1553-1713 (YSPTSPSYSP…SPSYSPSSPT (161 aa)) is C-terminal domain (CTD); 23 X 7 AA tandem repeats of Y-S-P-[ST]-S-P-[FST].

It belongs to the RNA polymerase beta' chain family. As to quaternary structure, component of the RNA polymerase II (Pol II) complex consisting of 12 subunits. In terms of processing, the tandem heptapeptide repeats in the C-terminal domain (CTD) can be highly phosphorylated. The phosphorylation activates Pol II. Phosphorylation occurs mainly at residues 'Ser-2' and 'Ser-5' of the heptapeptide repeat. The phosphorylation state is believed to result from the balanced action of site-specific CTD kinases and phosphatase, and a 'CTD code' that specifies the position of Pol II within the transcription cycle has been proposed. Following transcription stress, the elongating form of RNA polymerase II (RNA pol IIo) is polyubiquitinated via 'Lys-63'-linkages on Lys-1266 at DNA damage sites without leading to degradation: ubiquitination promotes RNA pol IIo backtracking to allow access by the transcription-coupled nucleotide excision repair (TC-NER) machinery. Subsequent DEF1-dependent polyubiquitination by the elongin complex via 'Lys-48'-linkages may lead to proteasome-mediated degradation; presumably at stalled RNA pol II where TC-NER has failed, to halt global transcription and enable 'last resort' DNA repair pathways.

It is found in the nucleus. It carries out the reaction RNA(n) + a ribonucleoside 5'-triphosphate = RNA(n+1) + diphosphate. DNA-dependent RNA polymerase catalyzes the transcription of DNA into RNA using the four ribonucleoside triphosphates as substrates. Largest and catalytic component of RNA polymerase II which synthesizes mRNA precursors and many functional non-coding RNAs. Forms the polymerase active center together with the second largest subunit. Pol II is the central component of the basal RNA polymerase II transcription machinery. It is composed of mobile elements that move relative to each other. RPB1 is part of the core element with the central large cleft, the clamp element that moves to open and close the cleft and the jaws that are thought to grab the incoming DNA template. At the start of transcription, a single-stranded DNA template strand of the promoter is positioned within the central active site cleft of Pol II. A bridging helix emanates from RPB1 and crosses the cleft near the catalytic site and is thought to promote translocation of Pol II by acting as a ratchet that moves the RNA-DNA hybrid through the active site by switching from straight to bent conformations at each step of nucleotide addition. During transcription elongation, Pol II moves on the template as the transcript elongates. Elongation is influenced by the phosphorylation status of the C-terminal domain (CTD) of Pol II largest subunit (RPB1), which serves as a platform for assembly of factors that regulate transcription initiation, elongation, termination and mRNA processing. This is DNA-directed RNA polymerase II subunit rpb1 (polr2a) from Dictyostelium discoideum (Social amoeba).